The sequence spans 239 residues: Tetraspanin-9 (239 aa).

Over 1–13 the chain is Cytoplasmic; it reads MARGCLCCLKYMM. Residues 14-34 traverse the membrane as a helical segment; the sequence is FLFNLIFWLCGCGLLGVGIWL. At 35–55 the chain is on the extracellular side; the sequence is SVSQGNFATFSPSFPSLSAAN. A helical membrane pass occupies residues 56–76; the sequence is LVIAIGTIVMVTGFLGCLGAI. At 77 to 85 the chain is on the cytoplasmic side; the sequence is KENRCLLLS. Residues 86-106 form a helical membrane-spanning segment; it reads FFIVLLIILLAELILIILFFV. Over 107 to 203 the chain is Extracellular; sequence YMDKVNENAR…VKMWFDDNKH (97 aa). N180 carries N-linked (GlcNAc...) asparagine glycosylation. The helical transmembrane segment at 204–224 threads the bilayer; sequence VLGTVGMCILIMQILGMAFSM. Residues 225–239 are Cytoplasmic-facing; that stretch reads TLFQHIHRTGKKYDA.

This sequence belongs to the tetraspanin (TM4SF) family. In terms of assembly, found in a complex with GP6. Glycosylated.

The protein localises to the membrane. The polypeptide is Tetraspanin-9 (TSPAN9) (Sus scrofa (Pig)).